A 226-amino-acid chain; its full sequence is UPF0173 metal-dependent hydrolase Fnod_0635 (226 aa).

This sequence belongs to the UPF0173 family.

The sequence is that of UPF0173 metal-dependent hydrolase Fnod_0635 from Fervidobacterium nodosum (strain ATCC 35602 / DSM 5306 / Rt17-B1).